Consider the following 194-residue polypeptide: GTP cyclohydrolase 1 (194 aa).

The Zn(2+) site is built by C83, H86, and C155.

It belongs to the GTP cyclohydrolase I family. In terms of assembly, toroid-shaped homodecamer, composed of two pentamers of five dimers.

It carries out the reaction GTP + H2O = 7,8-dihydroneopterin 3'-triphosphate + formate + H(+). The protein operates within cofactor biosynthesis; 7,8-dihydroneopterin triphosphate biosynthesis; 7,8-dihydroneopterin triphosphate from GTP: step 1/1. The sequence is that of GTP cyclohydrolase 1 from Streptococcus pyogenes serotype M5 (strain Manfredo).